A 128-amino-acid polypeptide reads, in one-letter code: Large ribosomal subunit protein bL19 (128 aa).

This sequence belongs to the bacterial ribosomal protein bL19 family.

In terms of biological role, this protein is located at the 30S-50S ribosomal subunit interface and may play a role in the structure and function of the aminoacyl-tRNA binding site. The protein is Large ribosomal subunit protein bL19 of Aromatoleum aromaticum (strain DSM 19018 / LMG 30748 / EbN1) (Azoarcus sp. (strain EbN1)).